A 228-amino-acid chain; its full sequence is UPF0502 protein AZOSEA09860 (228 aa).

It belongs to the UPF0502 family.

The sequence is that of UPF0502 protein AZOSEA09860 from Aromatoleum aromaticum (strain DSM 19018 / LMG 30748 / EbN1) (Azoarcus sp. (strain EbN1)).